The chain runs to 580 residues: Membrane protein insertase YidC (580 aa).

Transmembrane regions (helical) follow at residues 5 to 25, 259 to 279, 362 to 382, 427 to 447, 477 to 497, and 513 to 533; these read SVTG…FMSP, KYFV…LDGS, GLII…LSLA, LGGC…FYVF, IPMY…TVFV, and IMLY…PSGL.

Belongs to the OXA1/ALB3/YidC family. Type 1 subfamily. In terms of assembly, interacts with the Sec translocase complex via SecD. Specifically interacts with transmembrane segments of nascent integral membrane proteins during membrane integration.

Its subcellular location is the cell inner membrane. Required for the insertion and/or proper folding and/or complex formation of integral membrane proteins into the membrane. Involved in integration of membrane proteins that insert both dependently and independently of the Sec translocase complex, as well as at least some lipoproteins. Aids folding of multispanning membrane proteins. The sequence is that of Membrane protein insertase YidC from Chlorobium phaeovibrioides (strain DSM 265 / 1930) (Prosthecochloris vibrioformis (strain DSM 265)).